Here is a 278-residue protein sequence, read N- to C-terminus: Urease accessory protein UreD (278 aa).

It belongs to the UreD family. UreD, UreF and UreG form a complex that acts as a GTP-hydrolysis-dependent molecular chaperone, activating the urease apoprotein by helping to assemble the nickel containing metallocenter of UreC. The UreE protein probably delivers the nickel.

Its subcellular location is the cytoplasm. In terms of biological role, required for maturation of urease via the functional incorporation of the urease nickel metallocenter. In Staphylococcus aureus (strain bovine RF122 / ET3-1), this protein is Urease accessory protein UreD.